Reading from the N-terminus, the 354-residue chain is MGCTLSAEERAAMERSKAIEKNLKEDGMQAAKDIKLLLLGAGESGKSTIVKQMKIIHEGGFTSEDTKQYKPVVYSNTIQSLVAIIRAMGTLSIPFGDNERESDAKMVLDVIARMEDTEPFSEELLAAMKRLWVDSGVQECLGRANEYQLNDSAKYFLDDLDRLGAKDYMPTEQDILRTRVKTTGIVEVHFSFKNLNFKLFDVGGQRSERKKWIHCFEDVTAIIFCVAMSEYDQVLHEDETTNRMQESLKLFDSICNNKWFTETSIILFLNKKDLFEEKIKKSPLTICFPEYTGKQMYQEASAYIQAQFEAKNKSSAKEIYCHQTCATDTNNIQFVFDAVTDVIIANNLRGCGLY.

Gly-2 carries N-myristoyl glycine lipidation. Cys-3 carries the S-palmitoyl cysteine lipid modification. The region spanning 32–354 (KDIKLLLLGA…ANNLRGCGLY (323 aa)) is the G-alpha domain. The tract at residues 35-48 (KLLLLGAGESGKST) is G1 motif. GTP-binding positions include 40–47 (GAGESGKS), 176–182 (LRTRVKT), 201–205 (DVGGQ), 270–273 (NKKD), and Ala-326. Residues Ser-47 and Thr-182 each contribute to the Mg(2+) site. A G2 motif region spans residues 174-182 (DILRTRVKT). A G3 motif region spans residues 197 to 206 (FKLFDVGGQR). Residues 266 to 273 (ILFLNKKD) are G4 motif. Residues 324–329 (TCATDT) are G5 motif.

The protein belongs to the G-alpha family. G(i/o/t/z) subfamily. In terms of assembly, g proteins are composed of 3 units; alpha, beta and gamma. The alpha chain contains the guanine nucleotide binding site.

In terms of biological role, guanine nucleotide-binding proteins (G proteins) are involved as modulators or transducers in various transmembrane signaling systems. The G(o) protein function is not clear. The chain is Guanine nucleotide-binding protein G(o) subunit alpha from Planorbella trivolvis (Marsh rams-horn).